A 248-amino-acid polypeptide reads, in one-letter code: Pyruvate formate-lyase-activating enzyme (248 aa).

The region spanning 17–248 (VDGPGIRFIV…NKILETSSYK (232 aa)) is the Radical SAM core domain. The [4Fe-4S] cluster site is built by cysteine 31, cysteine 35, and cysteine 38. Residues 37-39 (FCH), glycine 80, 135-137 (DIK), and histidine 208 contribute to the S-adenosyl-L-methionine site.

This sequence belongs to the organic radical-activating enzymes family. Requires [4Fe-4S] cluster as cofactor.

Its subcellular location is the cytoplasm. The catalysed reaction is glycyl-[formate C-acetyltransferase] + reduced [flavodoxin] + S-adenosyl-L-methionine = glycin-2-yl radical-[formate C-acetyltransferase] + semiquinone [flavodoxin] + 5'-deoxyadenosine + L-methionine + H(+). Its function is as follows. Activation of pyruvate formate-lyase under anaerobic conditions by generation of an organic free radical, using S-adenosylmethionine and reduced flavodoxin as cosubstrates to produce 5'-deoxy-adenosine. The chain is Pyruvate formate-lyase-activating enzyme (pflA) from Listeria innocua serovar 6a (strain ATCC BAA-680 / CLIP 11262).